Here is a 257-residue protein sequence, read N- to C-terminus: MVLIRVLVNFLILQLSYAQKSSELVIGGDECNINEHRFLALLYSERFQCGGTLINEEWVLTAAHCDMRNMYIYLGVHNVSVQYDDEQRRYPKKKYFRLSSRNYNQWDKDIMLIRLNRPLRNSAHIAPLSLPSNPPSVGSVCRIMGWGTITSPQVTFPDVLHCANINIFDYEVCRAAYPELPATRRTLCAGILEGGKDSCNGDSGGPLICNGQFQGIAYWGADTCAQPREPGLYTKVFDYIDWIQSIIAGNTAVTCPP.

A signal peptide spans 1 to 18; that stretch reads MVLIRVLVNFLILQLSYA. Positions 19–24 are excised as a propeptide; the sequence is QKSSEL. A Peptidase S1 domain is found at 25–248; the sequence is VIGGDECNIN…YIDWIQSIIA (224 aa). Cystine bridges form between C31–C162, C49–C65, C141–C209, C173–C188, and C199–C224. The Charge relay system role is filled by H64. N78 is a glycosylation site (N-linked (GlcNAc...) asparagine). The active-site Charge relay system is D109. S203 functions as the Charge relay system in the catalytic mechanism.

The protein belongs to the peptidase S1 family. Snake venom subfamily. Monomer. Expressed by the venom gland.

It localises to the secreted. Functionally, snake venom serine protease that may act in the hemostasis system of the prey. The sequence is that of Snake venom serine protease salmonase from Gloydius brevicauda (Korean slamosa snake).